Consider the following 229-residue polypeptide: 2,3-bisphosphoglycerate-dependent phosphoglycerate mutase 2 (229 aa).

Residues 8 to 15, 21 to 22, arginine 60, 87 to 90, lysine 98, 114 to 115, and 183 to 184 each bind substrate; these read RHGQSEWN, TG, ERHY, RR, and GN. Histidine 9 functions as the Tele-phosphohistidine intermediate in the catalytic mechanism. Glutamate 87 acts as the Proton donor/acceptor in catalysis.

This sequence belongs to the phosphoglycerate mutase family. BPG-dependent PGAM subfamily.

The enzyme catalyses (2R)-2-phosphoglycerate = (2R)-3-phosphoglycerate. The protein operates within carbohydrate degradation; glycolysis; pyruvate from D-glyceraldehyde 3-phosphate: step 3/5. Its function is as follows. Catalyzes the interconversion of 2-phosphoglycerate and 3-phosphoglycerate. The chain is 2,3-bisphosphoglycerate-dependent phosphoglycerate mutase 2 from Latilactobacillus sakei subsp. sakei (strain 23K) (Lactobacillus sakei subsp. sakei).